A 141-amino-acid chain; its full sequence is Hemoglobin subunit alpha-1 (141 aa).

One can recognise a Globin domain in the interval 1–141 (VLTDAEKKEV…VATVLTSKYR (141 aa)). His-58 provides a ligand contact to O2. Residue His-87 coordinates heme b.

It belongs to the globin family. Heterotetramer of two alpha chains and two beta chains. In terms of tissue distribution, red blood cells.

Involved in oxygen transport from the lung to the various peripheral tissues. In Tachyglossus aculeatus aculeatus (Southeast Australian short-beaked echidna), this protein is Hemoglobin subunit alpha-1.